A 298-amino-acid polypeptide reads, in one-letter code: Single myb histone 2 (298 aa).

One can recognise an HTH myb-type domain in the interval 1–61 (MGVPKQRWTP…KWRNLSVTAG (61 aa)). Positions 28-57 (WRTILRDSDFSALLRLRSNVDLKDKWRNLS) form a DNA-binding region, H-T-H motif. The H15 domain maps to 124–192 (SVARLDDLIV…KVNQKYRIAP (69 aa)). Residues 237–278 (EEAAAFAAKAVAEAEVAMAEAEEAARVAEAAENDAEAAKAFL) adopt a coiled-coil conformation.

This sequence belongs to the histone H1/H5 family. SMH subfamily. Forms a homodimer and heterodimers.

It is found in the nucleus. The protein localises to the chromosome. It localises to the nucleolus. The protein resides in the telomere. Functionally, binds preferentially double-stranded telomeric repeats, but may also bind to the single telomeric strand. This is Single myb histone 2 (SMH2) from Zea mays (Maize).